The chain runs to 504 residues: Signal transduction histidine-protein kinase/phosphatase MprB (504 aa).

At 1–26 (MWWFRRRDRAPLRATSSLSLRWRVML) the chain is on the cytoplasmic side. The chain crosses the membrane as a helical span at residues 27–47 (LAMSMVAMVVVLMSFAVYAVI). Over 48–163 (SAALYSDIDN…PTEAVMNKLR (116 aa)) the chain is Extracellular. Residues 164–184 (WVLLIVGGIGVAVAAVAGGMV) form a helical membrane-spanning segment. Over 185–504 (TRAGLRPVGR…SVESQSTRAT (320 aa)) the chain is Cytoplasmic. An HAMP domain is found at 186-238 (RAGLRPVGRLTEAAERVARTDDLRPIPVFGSDELARLTEAFNLMLRALAESRE). The 221-residue stretch at 246–466 (DAGHELRTPL…SIYVLLPGRR (221 aa)) folds into the Histidine kinase domain. Residue histidine 249 is modified to Phosphohistidine; by autocatalysis. Residues 471 to 504 (QLPGATAGARSTDIENSRGSANVISVESQSTRAT) form a disordered region. Over residues 487–504 (SRGSANVISVESQSTRAT) the composition is skewed to polar residues.

It depends on Mg(2+) as a cofactor. Mn(2+) is required as a cofactor. Autophosphorylated.

Its subcellular location is the cell membrane. It catalyses the reaction ATP + protein L-histidine = ADP + protein N-phospho-L-histidine.. Functionally, member of the two-component regulatory system MprB/MprA which contributes to maintaining a balance among several systems involved in stress resistance and is required for establishment and maintenance of persistent infection in the host. In response to environmental signals MprB acts both as a membrane-associated protein kinase that undergoes autophosphorylation and subsequently transfers the phosphate to MprA, and a protein phosphatase that dephosphorylates phospho-MprA. The polypeptide is Signal transduction histidine-protein kinase/phosphatase MprB (mprB) (Mycobacterium tuberculosis (strain ATCC 25177 / H37Ra)).